The primary structure comprises 419 residues: Hydrolase LUC6 (419 aa).

Residue Ser238 is part of the active site.

It belongs to the AB hydrolase superfamily. FUS2 hydrolase family.

It functions in the pathway mycotoxin biosynthesis. Functionally, hydrolase; part of the gene cluster that mediates the biosynthesis of the mycotoxin lucilactaene and the lucilactaene-related compound NG-391 that act as cell cycle inhibitors with potent growth inhibitory activity against malarial parasites, moderate growth inhibitory activity against cancer cells, and no activity against bacteria and fungi. Within the pathway, LUC6 may catalyze the 2-pyrrolidone ring formation to form prelucilactaene C from prelucilactaene B, followed by C-15 hydroxylation by the same enzyme to give prelucilactaene D, epoxydation to yield prelucilactaene E, and finally cyclization to yield prelucilactaene F. The pathway begins with the hybrid PKS-NRPS synthetase LUC5 which is responsible for the condensation of one acetyl-coenzyme A (CoA) unit with six malonyl-CoA units and the amide linkage of the arising heptaketide and homoserine, subsequently releasing the first intermediate prelucilactaene B. Both the cytochrome P450 monooxygenase LUC2 and the hydrolase LUC6 function in parallel in modification of prelucilactaene B. LUC6 may catalyze the 2-pyrrolidone ring formation to form prelucilactaene C from prelucilactaene B, followed by C-15 hydroxylation by the same enzyme to give prelucilactaene D, which is then converted to prelucilactaene E by epoxidation, and finally to prelucilactaene F by cyclization. Prelucilactane D, prelucilactaene E, and prelucilactaene F can be converted to dihydrolucilactaene, NG391, and lucilactaene, respectively, via C-20 methyl group hydroxylation by the cytochrome P450 monooxygenase LUC2. However, LUC2, unlike FUS8 in fusarin C biosynthesis, is not enough for the full oxidation of the C-20 methyl group into carboxylic acid, which is a prerequisite for the final methylation step. The aldehyde dehydrogenase LUC3 is involved in the biosynthesis by further oxidation of the C-20 alcoholic analog prelucilactaene G into a carboxylic derivative. This unidentified carboxylic derivative may be converted to demethyllucilactaene. As the last step, the methyltransferase LUC1 methylates the hydroxyl group at C-21 of demethyllucilactaene to generate lucilactaene. The sequence is that of Hydrolase LUC6 from Fusarium sp.